The following is a 793-amino-acid chain: Phenylalanine--tRNA ligase beta subunit (793 aa).

In terms of domain architecture, tRNA-binding spans Ala39–Arg148. The B5 domain occupies Pro401–Ala477. Residues Asp455, Asp461, Glu464, and Glu465 each contribute to the Mg(2+) site. An FDX-ACB domain is found at Ser698 to Arg792.

Belongs to the phenylalanyl-tRNA synthetase beta subunit family. Type 1 subfamily. Tetramer of two alpha and two beta subunits. Requires Mg(2+) as cofactor.

It is found in the cytoplasm. It carries out the reaction tRNA(Phe) + L-phenylalanine + ATP = L-phenylalanyl-tRNA(Phe) + AMP + diphosphate + H(+). This is Phenylalanine--tRNA ligase beta subunit from Legionella pneumophila (strain Lens).